We begin with the raw amino-acid sequence, 78 residues long: Delta-conotoxin-like S6.8 (78 aa).

The N-terminal stretch at 1 to 22 (MKLTCMMIVAVLFLTAWTFVTA) is a signal peptide. Positions 23–53 (DDSRNGLKNLFPKARHEMKNPDASKLNKRDG) are excised as a propeptide. 3 cysteine pairs are disulfide-bonded: Cys-54–Cys-69, Cys-61–Cys-73, and Cys-68–Cys-77.

Belongs to the conotoxin O1 superfamily. In terms of tissue distribution, expressed by the venom duct.

It is found in the secreted. In terms of biological role, delta-conotoxins bind to site 6 of voltage-gated sodium channels (Nav) and inhibit the inactivation process. In Conus striatus (Striated cone), this protein is Delta-conotoxin-like S6.8.